A 120-amino-acid polypeptide reads, in one-letter code: Large ribosomal subunit protein uL18 (120 aa).

The protein belongs to the universal ribosomal protein uL18 family. Part of the 50S ribosomal subunit; part of the 5S rRNA/L5/L18/L25 subcomplex. Contacts the 5S and 23S rRNAs.

In terms of biological role, this is one of the proteins that bind and probably mediate the attachment of the 5S RNA into the large ribosomal subunit, where it forms part of the central protuberance. This is Large ribosomal subunit protein uL18 from Bacillus pumilus (strain SAFR-032).